We begin with the raw amino-acid sequence, 129 residues long: Follitropin subunit beta (129 aa).

Positions 1–20 (MKTLQFFFLFCCWKAICCNS) are cleaved as a signal peptide. 6 cysteine pairs are disulfide-bonded: C21/C69, C35/C84, C38/C122, C46/C100, C50/C102, and C105/C112. N-linked (GlcNAc...) asparagine glycans are attached at residues N25 and N42.

This sequence belongs to the glycoprotein hormones subunit beta family. As to quaternary structure, heterodimer. The active follitropin is a heterodimer composed of an alpha chain/CGA shared with other hormones and a unique beta chain/FSHB shown here.

Its subcellular location is the secreted. In terms of biological role, together with the alpha chain CGA constitutes follitropin, the follicle-stimulating hormone, and provides its biological specificity to the hormone heterodimer. Binds FSHR, a G protein-coupled receptor, on target cells to activate downstream signaling pathways. Follitropin is involved in follicle development and spermatogenesis in reproductive organs. The protein is Follitropin subunit beta (FSHB) of Gorilla gorilla gorilla (Western lowland gorilla).